The sequence spans 498 residues: Neoxanthin synthase, chloroplastic (498 aa).

Residues 1 to 33 (METLLKPLTSLLLSSPTPHRSIFQQNPPSLNPT) constitute a chloroplast transit peptide. The interval 16–38 (PTPHRSIFQQNPPSLNPTTKKKS) is disordered. Residues 22–33 (IFQQNPPSLNPT) are compositionally biased toward polar residues. 84-112 (VIIIGAGPAGLRLAEHVSKYGIKVCCVDP) contributes to the NAD(+) binding site.

Belongs to the lycopene cyclase family.

The protein resides in the plastid. It localises to the chloroplast. The enzyme catalyses all-trans-violaxanthin = all-trans-neoxanthin. It functions in the pathway carotenoid biosynthesis; neoxanthin biosynthesis. In terms of biological role, involved in the synthesis of neoxanthin, the last product of carotenoid synthesis and a precursor of abscisic acid. This is Neoxanthin synthase, chloroplastic (NXS) from Solanum tuberosum (Potato).